A 191-amino-acid polypeptide reads, in one-letter code: ATP synthase subunit b 2 (191 aa).

Over residues Met-1 to Glu-12 the composition is skewed to basic and acidic residues. Residues Met-1–Pro-31 are disordered. The chain crosses the membrane as a helical span at residues Pro-38–Leu-60.

It belongs to the ATPase B chain family. In terms of assembly, F-type ATPases have 2 components, F(1) - the catalytic core - and F(0) - the membrane proton channel. F(1) has five subunits: alpha(3), beta(3), gamma(1), delta(1), epsilon(1). F(0) has three main subunits: a(1), b(2) and c(10-14). The alpha and beta chains form an alternating ring which encloses part of the gamma chain. F(1) is attached to F(0) by a central stalk formed by the gamma and epsilon chains, while a peripheral stalk is formed by the delta and b chains.

The protein resides in the cell inner membrane. In terms of biological role, f(1)F(0) ATP synthase produces ATP from ADP in the presence of a proton or sodium gradient. F-type ATPases consist of two structural domains, F(1) containing the extramembraneous catalytic core and F(0) containing the membrane proton channel, linked together by a central stalk and a peripheral stalk. During catalysis, ATP synthesis in the catalytic domain of F(1) is coupled via a rotary mechanism of the central stalk subunits to proton translocation. Its function is as follows. Component of the F(0) channel, it forms part of the peripheral stalk, linking F(1) to F(0). The b'-subunit is a diverged and duplicated form of b found in plants and photosynthetic bacteria. This Bradyrhizobium sp. (strain ORS 278) protein is ATP synthase subunit b 2 (atpF2).